A 598-amino-acid chain; its full sequence is MRVKKRNVRGNAKNFITRSQAVRKLQISLADFRRLCIFKGIYPREPKNKKKANKGSTAPTTFYYAKDIQYLMHEPVLAKFREHKTFARKLTRALGRGEVSSAKKLEENRSTYKLDHIIKERYPSFPDAVRDIDDALNMLFLFANLPATNQISSRVIRDAQVICNQWLAYVAKERLIRKVFVSIKGIYYQANVKGEEVRWVIPFKFPENIPSDIDFRIMMTFLEFYSTLLHFVLFKLYTDSGLVYPPKIDVEQDKILSGINAYILESQEETSVLNAEVPSDAPDKEAQSIDTKTLAQAMKADSKDKDDNSNDEAPENVEDVELDEFEDHNKNKGDILAQPSKFSSPTATLFEDFVFYVGREVPIEAIEFLILSCGGKVISEAAMDQIEGNTEFDLSKVTHQIVDRPVLKHKVAGRTYIQPQWVFDCINKGELLSANLYLPGVSLPPHLSPWGDALGYDPTKEVESEDESSDSSEESDSEIENEEEDTKPAAITNEDDDEDVEELAAQKELELEASGIAYSKAKDEGLHDDVASKKKRKVTDEDEEEKKLKMIMMSNKQRKLYKKMKYSNQQKEDKIEELKKKKKQLAKKEKTLKKVEKK.

A disordered region spans residues 296–317 (QAMKADSKDKDDNSNDEAPENV). Positions 345-439 (PTATLFEDFV…ELLSANLYLP (95 aa)) constitute a BRCT domain. 3 disordered regions span residues 452-501 (DALG…EDVE), 515-544 (GIAY…EDEE), and 564-598 (MKYS…VEKK). Positions 463 to 485 (ESEDESSDSSEESDSEIENEEED) are enriched in acidic residues. 3 stretches are compositionally biased toward basic and acidic residues: residues 520–532 (KAKD…DVAS), 570–579 (QKEDKIEELK), and 586–598 (AKKE…VEKK). The stretch at 557–598 (QRKLYKKMKYSNQQKEDKIEELKKKKKQLAKKEKTLKKVEKK) forms a coiled coil.

The protein belongs to the pescadillo family. Component of the NOP7 complex, composed of ERB1, NOP7 and YTM1. The complex is held together by ERB1, which interacts with NOP7 via its N-terminal domain and with YTM1 via a high-affinity interaction between the seven-bladed beta-propeller domains of the 2 proteins. The NOP7 complex associates with the 66S pre-ribosome.

Its subcellular location is the nucleus. The protein localises to the nucleolus. It localises to the nucleoplasm. In terms of biological role, component of the NOP7 complex, which is required for maturation of the 25S and 5.8S ribosomal RNAs and formation of the 60S ribosome. The chain is Pescadillo homolog from Candida glabrata (strain ATCC 2001 / BCRC 20586 / JCM 3761 / NBRC 0622 / NRRL Y-65 / CBS 138) (Yeast).